An 856-amino-acid chain; its full sequence is DNA mismatch repair protein MutS (856 aa).

618-625 (GPNMGGKS) provides a ligand contact to ATP.

This sequence belongs to the DNA mismatch repair MutS family.

Its function is as follows. This protein is involved in the repair of mismatches in DNA. It is possible that it carries out the mismatch recognition step. This protein has a weak ATPase activity. This chain is DNA mismatch repair protein MutS, found in Shewanella baltica (strain OS195).